The chain runs to 88 residues: Conotoxin MaIr34 (88 aa).

Positions 1–21 (MKLTCVIVAVLFLTAWTFVMA) are cleaved as a signal peptide. Residues 22 to 53 (DDPRDGPDTAVRGGKRFWKARNEMNSAASKLN) constitute a propeptide that is removed on maturation. 3 disulfides stabilise this stretch: Cys-57-Cys-75, Cys-64-Cys-79, and Cys-74-Cys-83.

Belongs to the conotoxin O1 superfamily. Expressed by the venom duct.

It localises to the secreted. This is Conotoxin MaIr34 from Conus marmoreus (Marble cone).